The sequence spans 299 residues: Homoserine kinase (299 aa).

85–95 (PMSRGLGSSAT) contributes to the ATP binding site.

The protein belongs to the GHMP kinase family. Homoserine kinase subfamily.

It is found in the cytoplasm. It carries out the reaction L-homoserine + ATP = O-phospho-L-homoserine + ADP + H(+). Its pathway is amino-acid biosynthesis; L-threonine biosynthesis; L-threonine from L-aspartate: step 4/5. Functionally, catalyzes the ATP-dependent phosphorylation of L-homoserine to L-homoserine phosphate. This is Homoserine kinase from Clostridium novyi (strain NT).